A 167-amino-acid polypeptide reads, in one-letter code: Large ribosomal subunit protein uL23 (167 aa).

The large ribosomal subunit protein uL23 stretch occupies residues 1-130 (MNVNEIIKGP…ELEAKNKEIA (130 aa)). 2 disordered regions span residues 91–112 (FEDE…TDEK) and 137–167 (QAEL…NSAK). 2 stretches are compositionally biased toward basic and acidic residues: residues 97–112 (QDQK…TDEK) and 137–157 (QAEL…KIEN). The interval 131 to 167 (EKLAKKQAELAKKESETNENQEKKIENQTENQENSAK) is unknown. A compositionally biased stretch (polar residues) spans 158-167 (QTENQENSAK).

The protein belongs to the universal ribosomal protein uL23 family. As to quaternary structure, part of the 50S ribosomal subunit. Contacts protein L29, and trigger factor when it is bound to the ribosome.

Functionally, one of the early assembly proteins it binds 23S rRNA. One of the proteins that surrounds the polypeptide exit tunnel on the outside of the ribosome. Forms the main docking site for trigger factor binding to the ribosome. The polypeptide is Large ribosomal subunit protein uL23 (Mesomycoplasma hyopneumoniae (strain 7448) (Mycoplasma hyopneumoniae)).